Here is a 249-residue protein sequence, read N- to C-terminus: Pyridoxine 5'-phosphate synthase (249 aa).

Asn-10 serves as a coordination point for 3-amino-2-oxopropyl phosphate. Residue Asp-12–His-13 participates in 1-deoxy-D-xylulose 5-phosphate binding. Arg-21 serves as a coordination point for 3-amino-2-oxopropyl phosphate. The active-site Proton acceptor is the His-46. Residues Arg-48 and His-53 each coordinate 1-deoxy-D-xylulose 5-phosphate. Glu-73 (proton acceptor) is an active-site residue. A 1-deoxy-D-xylulose 5-phosphate-binding site is contributed by Thr-103. His-194 functions as the Proton donor in the catalytic mechanism. Residues Gly-195 and Gly-216–His-217 contribute to the 3-amino-2-oxopropyl phosphate site.

It belongs to the PNP synthase family. Homooctamer; tetramer of dimers.

The protein localises to the cytoplasm. The catalysed reaction is 3-amino-2-oxopropyl phosphate + 1-deoxy-D-xylulose 5-phosphate = pyridoxine 5'-phosphate + phosphate + 2 H2O + H(+). It functions in the pathway cofactor biosynthesis; pyridoxine 5'-phosphate biosynthesis; pyridoxine 5'-phosphate from D-erythrose 4-phosphate: step 5/5. In terms of biological role, catalyzes the complicated ring closure reaction between the two acyclic compounds 1-deoxy-D-xylulose-5-phosphate (DXP) and 3-amino-2-oxopropyl phosphate (1-amino-acetone-3-phosphate or AAP) to form pyridoxine 5'-phosphate (PNP) and inorganic phosphate. The polypeptide is Pyridoxine 5'-phosphate synthase (Rhodospirillum rubrum (strain ATCC 11170 / ATH 1.1.1 / DSM 467 / LMG 4362 / NCIMB 8255 / S1)).